The primary structure comprises 255 residues: Malonyl-[acyl-carrier protein] O-methyltransferase (255 aa).

This sequence belongs to the methyltransferase superfamily.

The enzyme catalyses malonyl-[ACP] + S-adenosyl-L-methionine = malonyl-[ACP] methyl ester + S-adenosyl-L-homocysteine. Its pathway is cofactor biosynthesis; biotin biosynthesis. Its function is as follows. Converts the free carboxyl group of a malonyl-thioester to its methyl ester by transfer of a methyl group from S-adenosyl-L-methionine (SAM). It allows to synthesize pimeloyl-ACP via the fatty acid synthetic pathway. This chain is Malonyl-[acyl-carrier protein] O-methyltransferase, found in Serratia marcescens.